Reading from the N-terminus, the 365-residue chain is Succinyl-diaminopimelate desuccinylase (365 aa).

Residue histidine 65 coordinates Zn(2+). Aspartate 67 is an active-site residue. Aspartate 96 is a Zn(2+) binding site. Glutamate 126 functions as the Proton acceptor in the catalytic mechanism. Residues glutamate 127, glutamate 155, and histidine 340 each coordinate Zn(2+).

It belongs to the peptidase M20A family. DapE subfamily. In terms of assembly, homodimer. The cofactor is Zn(2+). Requires Co(2+) as cofactor.

It carries out the reaction N-succinyl-(2S,6S)-2,6-diaminopimelate + H2O = (2S,6S)-2,6-diaminopimelate + succinate. It participates in amino-acid biosynthesis; L-lysine biosynthesis via DAP pathway; LL-2,6-diaminopimelate from (S)-tetrahydrodipicolinate (succinylase route): step 3/3. Its function is as follows. Catalyzes the hydrolysis of N-succinyl-L,L-diaminopimelic acid (SDAP), forming succinate and LL-2,6-diaminopimelate (DAP), an intermediate involved in the bacterial biosynthesis of lysine and meso-diaminopimelic acid, an essential component of bacterial cell walls. The sequence is that of Succinyl-diaminopimelate desuccinylase from Campylobacter jejuni subsp. jejuni serotype O:2 (strain ATCC 700819 / NCTC 11168).